A 237-amino-acid chain; its full sequence is LexA repressor (237 aa).

Residues 26–46 (FDEMKDALGLKSKSGIHRLIT) constitute a DNA-binding region (H-T-H motif). Active-site for autocatalytic cleavage activity residues include Ser158 and Lys196.

The protein belongs to the peptidase S24 family. As to quaternary structure, homodimer.

It carries out the reaction Hydrolysis of Ala-|-Gly bond in repressor LexA.. Its function is as follows. Represses a number of genes involved in the response to DNA damage (SOS response), including recA and lexA. In the presence of single-stranded DNA, RecA interacts with LexA causing an autocatalytic cleavage which disrupts the DNA-binding part of LexA, leading to derepression of the SOS regulon and eventually DNA repair. This is LexA repressor from Rhodospirillum centenum (strain ATCC 51521 / SW).